Reading from the N-terminus, the 140-residue chain is MLISRSSMPNLQKRHSDFKTPVYISRSISILNKIFHPCMYIYSRGITNDTYSSDTYELDWYDLGFVHFSKWVELAWCFLTLATWSFMKLLKTLRIVIYICTSDHWTHSLRFYYIELSKILLYLLICGVSLYGAIRIFINL.

The next 2 helical transmembrane spans lie at 63 to 83 (LGFVHFSKWVELAWCFLTLAT) and 119 to 139 (ILLYLLICGVSLYGAIRIFIN).

The protein localises to the membrane. This is an uncharacterized protein from Schizosaccharomyces pombe (strain 972 / ATCC 24843) (Fission yeast).